Here is a 360-residue protein sequence, read N- to C-terminus: U7 snRNA-associated Sm-like protein LSm11 (360 aa).

The disordered stretch occupies residues methionine 1 to aspartate 29. 2 positions are modified to phosphoserine: serine 15 and serine 21. Arginine 41 is modified (omega-N-methylarginine). The interval arginine 68 to asparagine 143 is disordered. Over residues arginine 78 to glycine 94 the composition is skewed to low complexity. A Glycyl lysine isopeptide (Lys-Gly) (interchain with G-Cter in SUMO2) cross-link involves residue lysine 120. Residue serine 154 is modified to Phosphoserine. In terms of domain architecture, Sm spans serine 154–leucine 229. The interval valine 171–threonine 204 is SM 1. The segment at alanine 268–valine 333 is disordered. The residue at position 280 (serine 280) is a Phosphoserine. The span at glycine 299–glycine 322 shows a compositional bias: polar residues. Residues isoleucine 343–valine 356 are SM 2.

It belongs to the snRNP Sm proteins family. As to quaternary structure, component of the heptameric ring U7 snRNP complex, or U7 Sm protein core complex, at least composed of LSM10, LSM11, SNRPB, SNRPD3, SNRPE, SNRPF, SNRPG and U7 snRNA. Formation of the U7 snRNP is an ATP-dependent process mediated by a specialized SMN complex containing at least the Sm protein core complex and additionally, the U7-specific LSM10 and LSM11 proteins. Identified in a histone pre-mRNA complex, at least composed of ERI1, LSM11, SLBP, SNRPB, SYNCRIP and YBX1. Interacts (via the Sm domains) with CLNS1A. Interacts with SMN and ZNF473. Interacts with PRMT5 and WDR77.

It localises to the nucleus. Component of the U7 snRNP complex that is involved in the histone 3'-end pre-mRNA processing. Increases U7 snRNA levels but not histone 3'-end pre-mRNA processing activity, when overexpressed. Required for cell cycle progression from G1 to S phases. Binds specifically to the Sm-binding site of U7 snRNA. The sequence is that of U7 snRNA-associated Sm-like protein LSm11 from Homo sapiens (Human).